The chain runs to 509 residues: Heat shock 70 kDa protein 14 (509 aa).

Belongs to the heat shock protein 70 family. Component of ribosome-associated complex (RAC), a heterodimer composed of Hsp70/DnaK-type chaperone HSPA14 and Hsp40/DnaJ-type chaperone DNAJC2.

Its subcellular location is the cytoplasm. It localises to the cytosol. Its function is as follows. Component of the ribosome-associated complex (RAC), a complex involved in folding or maintaining nascent polypeptides in a folding-competent state. In the RAC complex, binds to the nascent polypeptide chain, while DNAJC2 stimulates its ATPase activity. The sequence is that of Heat shock 70 kDa protein 14 (HSPA14) from Homo sapiens (Human).